A 621-amino-acid polypeptide reads, in one-letter code: Chaperone protein DnaK (621 aa).

T175 is modified (phosphothreonine; by autocatalysis). Basic and acidic residues predominate over residues 499–516 (EAHEADDKKRKEDAETRN). Disordered stretches follow at residues 499 to 520 (EAHEADDKKRKEDAETRNNAEN) and 583 to 621 (AQQGAEGAAGAADSGSANNGGDDDVVDAEVVDDDDKDNK). A compositionally biased stretch (low complexity) spans 583–602 (AQQGAEGAAGAADSGSANNG). A compositionally biased stretch (acidic residues) spans 603–621 (GDDDVVDAEVVDDDDKDNK).

It belongs to the heat shock protein 70 family.

Its function is as follows. Acts as a chaperone. The sequence is that of Chaperone protein DnaK from Bifidobacterium animalis subsp. lactis (strain AD011).